A 144-amino-acid polypeptide reads, in one-letter code: 3-hydroxyacyl-[acyl-carrier-protein] dehydratase FabZ (144 aa).

The active site involves histidine 48.

The protein belongs to the thioester dehydratase family. FabZ subfamily.

Its subcellular location is the cytoplasm. It carries out the reaction a (3R)-hydroxyacyl-[ACP] = a (2E)-enoyl-[ACP] + H2O. In terms of biological role, involved in unsaturated fatty acids biosynthesis. Catalyzes the dehydration of short chain beta-hydroxyacyl-ACPs and long chain saturated and unsaturated beta-hydroxyacyl-ACPs. This Listeria welshimeri serovar 6b (strain ATCC 35897 / DSM 20650 / CCUG 15529 / CIP 8149 / NCTC 11857 / SLCC 5334 / V8) protein is 3-hydroxyacyl-[acyl-carrier-protein] dehydratase FabZ.